The sequence spans 159 residues: RNA pyrophosphohydrolase (159 aa).

The Nudix hydrolase domain occupies 6–149 (GFRPNVGIIL…KREVYRRALK (144 aa)). Positions 38–59 (GGINPDETPEDALYRELNEEVG) match the Nudix box motif.

It belongs to the Nudix hydrolase family. RppH subfamily. A divalent metal cation serves as cofactor.

Accelerates the degradation of transcripts by removing pyrophosphate from the 5'-end of triphosphorylated RNA, leading to a more labile monophosphorylated state that can stimulate subsequent ribonuclease cleavage. In Pseudomonas putida (strain ATCC 700007 / DSM 6899 / JCM 31910 / BCRC 17059 / LMG 24140 / F1), this protein is RNA pyrophosphohydrolase.